A 302-amino-acid chain; its full sequence is Sulfotransferase 1C4 (302 aa).

55–60 is a binding site for 3'-phosphoadenylyl sulfate; that stretch reads KAGTTW. 113 to 115 serves as a coordination point for substrate; it reads KTH. The active-site Proton acceptor is histidine 115. Residues arginine 137, serine 145, tyrosine 200, 234 to 239, and 262 to 266 each bind 3'-phosphoadenylyl sulfate; these read TSFDVM and FMRKG.

This sequence belongs to the sulfotransferase 1 family. Expressed in liver, kidney and jejunum.

Its subcellular location is the cytoplasm. It is found in the cytosol. It carries out the reaction a phenol + 3'-phosphoadenylyl sulfate = an aryl sulfate + adenosine 3',5'-bisphosphate + H(+). The catalysed reaction is 17beta-estradiol + 3'-phosphoadenylyl sulfate = 17beta-estradiol 3-sulfate + adenosine 3',5'-bisphosphate + H(+). The enzyme catalyses bisphenol A + 3'-phosphoadenylyl sulfate = bisphenyl A sulfate + adenosine 3',5'-bisphosphate + H(+). Sulfotransferase that utilizes 3'-phospho-5'-adenylyl sulfate (PAPS) as sulfonate donor to catalyze the sulfate conjugation of phenolic compounds and estrogen (E2). Can also sulfonate estrogenic compounds, however, the dietary flavonoids (phytoestrogen) and environmental estrogens, like bisphenol A are better substrates than 17beta-estradiol (E2). In Macaca fascicularis (Crab-eating macaque), this protein is Sulfotransferase 1C4 (SULT1C4).